Consider the following 186-residue polypeptide: UPF0397 protein LBUL_1584 (186 aa).

A run of 5 helical transmembrane segments spans residues 13–33, 46–66, 79–99, 114–134, and 150–170; these read IAAL…ASIP, AFLA…VGFI, TWWN…LYAL, VIFN…LGSV, and QAGL…TILL.

It belongs to the UPF0397 family.

It localises to the cell membrane. The sequence is that of UPF0397 protein LBUL_1584 from Lactobacillus delbrueckii subsp. bulgaricus (strain ATCC BAA-365 / Lb-18).